Consider the following 499-residue polypeptide: Lysine--tRNA ligase (499 aa).

Mg(2+)-binding residues include Glu408 and Glu415.

The protein belongs to the class-II aminoacyl-tRNA synthetase family. Homodimer. Requires Mg(2+) as cofactor.

It localises to the cytoplasm. The catalysed reaction is tRNA(Lys) + L-lysine + ATP = L-lysyl-tRNA(Lys) + AMP + diphosphate. The chain is Lysine--tRNA ligase from Bacillus thuringiensis (strain Al Hakam).